The following is a 285-amino-acid chain: V-set and transmembrane domain-containing protein 2B (285 aa).

The signal sequence occupies residues 1-28 (MEQRNRLGALGYLPPLLLHALLLFVADA). An Ig-like V-type domain is found at 29–143 (AFTEVPKDVT…DDDTQEHKAQ (115 aa)). At 29–263 (AFTEVPKDVT…HGSGTGRSYT (235 aa)) the chain is on the extracellular side. Residues Cys-49 and Cys-127 are joined by a disulfide bond. A disordered region spans residues 161–226 (EAVSHIQSSG…EAAAASAAHT (66 aa)). Low complexity-rich tracts occupy residues 177–189 (ASAA…GAAS) and 208–226 (PAAI…AAHT). The helical transmembrane segment at 264-284 (TDPLLSLLLLALHKFLRLLLG) threads the bilayer. Residue His-285 is a topological domain, cytoplasmic.

The protein resides in the membrane. The polypeptide is V-set and transmembrane domain-containing protein 2B (VSTM2B) (Homo sapiens (Human)).